Here is a 116-residue protein sequence, read N- to C-terminus: Non-specific lipid-transfer protein 5 (116 aa).

The first 24 residues, 1 to 24, serve as a signal peptide directing secretion; that stretch reads MARSMKLACVVLVMCMIVAPMAEG. Cystine bridges form between C28–C75, C38–C52, C53–C98, and C73–C112.

The protein belongs to the plant LTP family.

In terms of biological role, plant non-specific lipid-transfer proteins transfer phospholipids as well as galactolipids across membranes. May play a role in wax or cutin deposition in the cell walls of expanding epidermal cells and certain secretory tissues. The sequence is that of Non-specific lipid-transfer protein 5 from Lens culinaris (Lentil).